The primary structure comprises 111 residues: Succinate dehydrogenase assembly factor 1B, mitochondrial (111 aa).

The protein belongs to the complex I LYR family. SDHAF1 subfamily. As to quaternary structure, interacts with the iron-sulfur protein subunit within the SDH catalytic dimer.

It localises to the mitochondrion matrix. Its function is as follows. Plays an essential role in the assembly of succinate dehydrogenase (SDH), an enzyme complex (also referred to as respiratory complex II) that is a component of both the tricarboxylic acid (TCA) cycle and the mitochondrial electron transport chain, and which couples the oxidation of succinate to fumarate with the reduction of ubiquinone (coenzyme Q) to ubiquinol. Promotes maturation of the iron-sulfur protein subunit of the SDH catalytic dimer, protecting it from the deleterious effects of oxidants. May act together with SDHAF3. The sequence is that of Succinate dehydrogenase assembly factor 1B, mitochondrial from Dictyostelium discoideum (Social amoeba).